The chain runs to 141 residues: Large ribosomal subunit protein uL11 (141 aa).

This sequence belongs to the universal ribosomal protein uL11 family. In terms of assembly, part of the ribosomal stalk of the 50S ribosomal subunit. Interacts with L10 and the large rRNA to form the base of the stalk. L10 forms an elongated spine to which L12 dimers bind in a sequential fashion forming a multimeric L10(L12)X complex. One or more lysine residues are methylated.

In terms of biological role, forms part of the ribosomal stalk which helps the ribosome interact with GTP-bound translation factors. In Shouchella clausii (strain KSM-K16) (Alkalihalobacillus clausii), this protein is Large ribosomal subunit protein uL11.